The following is a 416-amino-acid chain: Gamma-glutamyl phosphate reductase (416 aa).

The protein belongs to the gamma-glutamyl phosphate reductase family.

It is found in the cytoplasm. It catalyses the reaction L-glutamate 5-semialdehyde + phosphate + NADP(+) = L-glutamyl 5-phosphate + NADPH + H(+). It participates in amino-acid biosynthesis; L-proline biosynthesis; L-glutamate 5-semialdehyde from L-glutamate: step 2/2. In terms of biological role, catalyzes the NADPH-dependent reduction of L-glutamate 5-phosphate into L-glutamate 5-semialdehyde and phosphate. The product spontaneously undergoes cyclization to form 1-pyrroline-5-carboxylate. The polypeptide is Gamma-glutamyl phosphate reductase (Actinobacillus succinogenes (strain ATCC 55618 / DSM 22257 / CCUG 43843 / 130Z)).